The sequence spans 149 residues: Nucleoside diphosphate kinase (149 aa).

ATP is bound by residues K9, F57, R85, T91, R102, and N112. The active-site Pros-phosphohistidine intermediate is the H115.

Belongs to the NDK family. In terms of assembly, homotetramer. It depends on Mg(2+) as a cofactor.

It localises to the cytoplasm. It catalyses the reaction a 2'-deoxyribonucleoside 5'-diphosphate + ATP = a 2'-deoxyribonucleoside 5'-triphosphate + ADP. The catalysed reaction is a ribonucleoside 5'-diphosphate + ATP = a ribonucleoside 5'-triphosphate + ADP. In terms of biological role, major role in the synthesis of nucleoside triphosphates other than ATP. The ATP gamma phosphate is transferred to the NDP beta phosphate via a ping-pong mechanism, using a phosphorylated active-site intermediate. In Acaryochloris marina (strain MBIC 11017), this protein is Nucleoside diphosphate kinase.